The sequence spans 109 residues: Trafficking protein particle complex subunit 2-like protein (109 aa).

The protein belongs to the TRAPP small subunits family. Sedlin subfamily. In terms of assembly, component of the multisubunit TRAPP (transport protein particle) complex, which includes at least TRAPPC2, TRAPPC2L, TRAPPC3, TRAPPC3L, TRAPPC4, TRAPPC5, TRAPPC8, TRAPPC9, TRAPPC10, TRAPPC11 and TRAPPC12. Interacts with the heterodimer TRAPPC3-TRAPPC6A.

The protein resides in the cytoplasm. Its subcellular location is the perinuclear region. The protein localises to the endoplasmic reticulum. It is found in the golgi apparatus. Its function is as follows. May play a role in vesicular transport from endoplasmic reticulum to Golgi. In Pongo abelii (Sumatran orangutan), this protein is Trafficking protein particle complex subunit 2-like protein (TRAPPC2L).